A 184-amino-acid polypeptide reads, in one-letter code: ATP synthase subunit b, chloroplastic (184 aa).

Residues 27–49 (LATNPINLSVVFGVLIFFGKGVL) traverse the membrane as a helical segment.

It belongs to the ATPase B chain family. As to quaternary structure, F-type ATPases have 2 components, F(1) - the catalytic core - and F(0) - the membrane proton channel. F(1) has five subunits: alpha(3), beta(3), gamma(1), delta(1), epsilon(1). F(0) has four main subunits: a(1), b(1), b'(1) and c(10-14). The alpha and beta chains form an alternating ring which encloses part of the gamma chain. F(1) is attached to F(0) by a central stalk formed by the gamma and epsilon chains, while a peripheral stalk is formed by the delta, b and b' chains.

It is found in the plastid. The protein resides in the chloroplast thylakoid membrane. Its function is as follows. F(1)F(0) ATP synthase produces ATP from ADP in the presence of a proton or sodium gradient. F-type ATPases consist of two structural domains, F(1) containing the extramembraneous catalytic core and F(0) containing the membrane proton channel, linked together by a central stalk and a peripheral stalk. During catalysis, ATP synthesis in the catalytic domain of F(1) is coupled via a rotary mechanism of the central stalk subunits to proton translocation. In terms of biological role, component of the F(0) channel, it forms part of the peripheral stalk, linking F(1) to F(0). This is ATP synthase subunit b, chloroplastic from Arabidopsis thaliana (Mouse-ear cress).